The primary structure comprises 1317 residues: Putative late blight resistance protein homolog R1B-14 (1317 aa).

Coiled-coil stretches lie at residues 419–442 and 535–556; these read RYSD…ESLQ and RMNE…RLLN. The NB-ARC domain maps to 521–823; sequence TVITHTSSQL…SESFIKSSEG (303 aa). Residue 568–575 coordinates ATP; sequence GMPGLGKT. LRR repeat units lie at residues 944-968, 987-1015, 1090-1114, 1138-1161, 1164-1186, and 1187-1211; these read FKFL…LFYL, LWNL…IWDM, PIRL…ISAP, LKHL…KVSN, FPQL…ADDA, and FPNL…FMDI. The 67-residue stretch at 1251-1317 folds into the HMA domain; that stretch reads IKKMVLKFDI…VSKLRKRGML (67 aa).

The protein belongs to the disease resistance NB-LRR family.

It localises to the cytoplasm. Its subcellular location is the membrane. Confers resistance to late blight (Phytophthora infestans) races carrying the avirulence gene Avr1. Resistance proteins guard the plant against pathogens that contain an appropriate avirulence protein via an indirect interaction with this avirulence protein. That triggers a defense system including the hypersensitive response, which restricts the pathogen growth. This chain is Putative late blight resistance protein homolog R1B-14 (R1B-14), found in Solanum demissum (Wild potato).